Reading from the N-terminus, the 125-residue chain is Succinate dehydrogenase assembly factor 3, mitochondrial (125 aa).

A mitochondrion-targeting transit peptide spans 1–30; it reads MPGRHVSRVRALYKRVLQLHRVLPPDLKSL.

It belongs to the complex I LYR family. SDHAF3 subfamily. Interacts with SDHB within an SDHA-SDHB subcomplex.

Its subcellular location is the mitochondrion matrix. Its function is as follows. Plays an essential role in the assembly of succinate dehydrogenase (SDH), an enzyme complex (also referred to as respiratory complex II) that is a component of both the tricarboxylic acid (TCA) cycle and the mitochondrial electron transport chain, and which couples the oxidation of succinate to fumarate with the reduction of ubiquinone (coenzyme Q) to ubiquinol. Promotes maturation of the iron-sulfur protein subunit SDHB of the SDH catalytic dimer, protecting it from the deleterious effects of oxidants. May act together with SDHAF1. This is Succinate dehydrogenase assembly factor 3, mitochondrial from Homo sapiens (Human).